A 145-amino-acid polypeptide reads, in one-letter code: Nucleoside diphosphate kinase (145 aa).

Positions 11, 59, 87, 93, 104, and 114 each coordinate ATP. His117 functions as the Pros-phosphohistidine intermediate in the catalytic mechanism.

The protein belongs to the NDK family. It depends on Mg(2+) as a cofactor.

It localises to the cytoplasm. The enzyme catalyses a 2'-deoxyribonucleoside 5'-diphosphate + ATP = a 2'-deoxyribonucleoside 5'-triphosphate + ADP. The catalysed reaction is a ribonucleoside 5'-diphosphate + ATP = a ribonucleoside 5'-triphosphate + ADP. In terms of biological role, major role in the synthesis of nucleoside triphosphates other than ATP. The ATP gamma phosphate is transferred to the NDP beta phosphate via a ping-pong mechanism, using a phosphorylated active-site intermediate. In Sulfolobus acidocaldarius (strain ATCC 33909 / DSM 639 / JCM 8929 / NBRC 15157 / NCIMB 11770), this protein is Nucleoside diphosphate kinase.